The chain runs to 321 residues: MIFITLEHILAHISFSLISVVTLAYWGTLVHQIEGLSSSGGKGMIVTFVCTTGLLITRWLYSGHLPLSNLYESFMFLSWSSSVIHIILEVRSQKDRGLGAITAPSTMLTHGFATSGLPKEMQQSAMLVPALQSHWLMMHVSMILLSYATLLCGSLSSIAFLIITFRRNRRILSLLSARDNSFIWPFPSRNNLYLHEQEKSDLQNTFYLSFTNHRKCKLTQQLDYWSYRVIGLGFLLLTIGILSGAVWANEAWGSRWSWDPKETWALITWIIFAIYLHTRVNKGWQDENPAIIASLGSFIVWICYLGVDLLGIGLHSYGWLI.

The next 8 membrane-spanning stretches (helical) occupy residues 1 to 21 (MIFITLEHILAHISFSLISVV), 36 to 56 (LSSSGGKGMIVTFVCTTGLLI), 70 to 90 (LYESFMFLSWSSSVIHIILEV), 97 to 117 (GLGAITAPSTMLTHGFATSGL), 143 to 163 (ILLSYATLLCGSLSSIAFLII), 229 to 249 (VIGLGFLLLTIGILSGAVWAN), 256 to 276 (WSWDPKETWALITWIIFAIYL), and 290 to 310 (AIIASLGSFIVWICYLGVDLL).

This sequence belongs to the CcmF/CycK/Ccl1/NrfE/CcsA family. As to quaternary structure, may interact with Ccs1.

The protein localises to the plastid. The protein resides in the chloroplast thylakoid membrane. In terms of biological role, required during biogenesis of c-type cytochromes (cytochrome c6 and cytochrome f) at the step of heme attachment. The protein is Cytochrome c biogenesis protein CcsA of Cycas taitungensis (Prince sago).